Reading from the N-terminus, the 61-residue chain is uncharacterized protein (61 aa).

This is an uncharacterized protein from Archaeoglobus fulgidus (strain ATCC 49558 / DSM 4304 / JCM 9628 / NBRC 100126 / VC-16).